The following is a 365-amino-acid chain: Putative F-box/kelch-repeat protein At3g16880 (365 aa).

Residues Met1–Gln47 form the F-box domain. Kelch repeat units follow at residues Arg98–Ser149 and Ile155–Asn205.

In Arabidopsis thaliana (Mouse-ear cress), this protein is Putative F-box/kelch-repeat protein At3g16880.